The following is a 928-amino-acid chain: cGMP-dependent 3',5'-cyclic phosphodiesterase (928 aa).

Ser-109 carries the phosphoserine modification. A disordered region spans residues 188–210; it reads RRPEAVQNTSADPSEDQKDEKGY. GAF domains lie at 228 to 365 and 397 to 536; these read DATS…GTVL and DVSV…GISI. Ser-419, Asp-434, Ile-453, Tyr-476, and Thr-487 together coordinate 3',5'-cyclic GMP. The region spanning 566–890 is the PDEase domain; that stretch reads SDDEYTKLLH…EHWTKVSHKF (325 aa). His-644 acts as the Proton donor in catalysis. His-648, His-684, Asp-685, and Asp-796 together coordinate Zn(2+). Asp-685 is a binding site for Mg(2+).

Belongs to the cyclic nucleotide phosphodiesterase family. PDE2 subfamily. As to quaternary structure, homodimer. It depends on Zn(2+) as a cofactor. Requires Mg(2+) as cofactor. In terms of tissue distribution, expressed in brain and liver.

It localises to the cell membrane. The protein localises to the cytoplasm. Its subcellular location is the mitochondrion matrix. The protein resides in the mitochondrion inner membrane. It is found in the mitochondrion outer membrane. It catalyses the reaction a nucleoside 3',5'-cyclic phosphate + H2O = a nucleoside 5'-phosphate + H(+). The catalysed reaction is 3',5'-cyclic GMP + H2O = GMP + H(+). It carries out the reaction 3',5'-cyclic AMP + H2O = AMP + H(+). With respect to regulation, the 3',5'-cyclic-AMP phosphodiesterase activity is stimulated by 3',5'-cyclic GMP. Specifically inhibited by Bay 60-7550. When repressed, protected from ionomycin- but not staurosporin-induced cell death. CGMP-activated cyclic nucleotide phosphodiesterase with a dual-specificity for the second messengers cAMP and cGMP, which are key regulators of many important physiological processes. Has a higher efficiency with cGMP compared to cAMP. Plays a role in cell growth and migration. In terms of biological role, regulates mitochondrial cAMP levels and respiration. Involved in the regulation of mitochondria morphology/dynamics and apoptotic cell death via local modulation of cAMP/PKA signaling in the mitochondrion, including the monitoring of local cAMP levels at the outer mitochondrial membrane and of PKA-dependent phosphorylation of Dnm1l. The polypeptide is cGMP-dependent 3',5'-cyclic phosphodiesterase (Rattus norvegicus (Rat)).